The sequence spans 461 residues: Photosystem II CP43 reaction center protein (461 aa).

Positions 1–2 (ME) are excised as a propeptide. Thr-3 carries the post-translational modification N-acetylthreonine. Thr-3 is subject to Phosphothreonine. Transmembrane regions (helical) follow at residues 57-81 (LFEVSHFVPEKPMYEQGLILLPHIA), 122-143 (LIGPETLEESYPFFGYVWKDKN), 166-188 (KAMYFGGVYDTWAPGGGDVRVIT), 243-263 (TPWPWARRAFVWSGEAYLSYS), and 279-300 (WFNNTAYPSEFYGPTGPEASQS). Glu-355 serves as a coordination point for [CaMn4O5] cluster. Residues 435–459 (RARAAAAGFEKGIDRFDEPVLSMRP) form a helical membrane-spanning segment.

Belongs to the PsbB/PsbC family. PsbC subfamily. In terms of assembly, PSII is composed of 1 copy each of membrane proteins PsbA, PsbB, PsbC, PsbD, PsbE, PsbF, PsbH, PsbI, PsbJ, PsbK, PsbL, PsbM, PsbT, PsbX, PsbY, PsbZ, Psb30/Ycf12, at least 3 peripheral proteins of the oxygen-evolving complex and a large number of cofactors. It forms dimeric complexes. Binds multiple chlorophylls and provides some of the ligands for the Ca-4Mn-5O cluster of the oxygen-evolving complex. It may also provide a ligand for a Cl- that is required for oxygen evolution. PSII binds additional chlorophylls, carotenoids and specific lipids. serves as cofactor. Post-translationally, phosphorylated in vitro.

It localises to the plastid. The protein resides in the chloroplast thylakoid membrane. In terms of biological role, one of the components of the core complex of photosystem II (PSII). It binds chlorophyll and helps catalyze the primary light-induced photochemical processes of PSII. PSII is a light-driven water:plastoquinone oxidoreductase, using light energy to abstract electrons from H(2)O, generating O(2) and a proton gradient subsequently used for ATP formation. The chain is Photosystem II CP43 reaction center protein from Chlamydomonas reinhardtii (Chlamydomonas smithii).